The chain runs to 373 residues: Methylmalonyl-CoA decarboxylase subunit beta (373 aa).

The next 10 helical transmembrane spans lie at 17–37 (FLAFTTGNAIMILVGLILLYL), 38–58 (AFAREFEPLLLGPIAFGCLLA), 81–101 (IFPPLIFLGVGAMTDFGPLIA), 106–126 (LLLGAAAQIGVFAALGGAMML), 132–152 (EAAAIGIIGGADGPTSIYLAT), 156–176 (PHLLGAIAVAAYSYMSLVPLI), 206–226 (IVFPIVATIFISLLLPSITSL), 257–277 (VTIFLATGTGLTMSAEHFLSL), 280–300 (IKIILLGLFAFICGTAGGVLF), and 343–363 (FLLMHAMGPNVAGVIGTAVAA).

Belongs to the GcdB/MmdB/OadB family. As to quaternary structure, the methylmalonyl-CoA decarboxylase is composed of five subunits: the carboxyltransferase alpha subunit (MmdA), the tunnel beta subunit (MmdB), the biotin-containing gamma subunit (MmdC), and the delta (MmdD) and epsilon (MmdE) subunits. The N-terminus is blocked.

It localises to the cell membrane. The catalysed reaction is (S)-methylmalonyl-CoA + Na(+)(in) + H(+)(out) = propanoyl-CoA + Na(+)(out) + CO2. Its activity is regulated as follows. Completely inhibited by avidin. Tunnel subunit of the sodium ion pump methylmalonyl-CoA decarboxylase, which converts the chemical energy of a decarboxylation reaction into an electrochemical gradient of Na(+) ions across the cytoplasmic membrane, thereby creating a sodium ion motive force that is used for ATP synthesis. The beta subunit catalyzes the decarboxylation of the carboxybiotin carrier protein and the coupled export of Na(+) ions. Can also convert malonyl-CoA into acetyl-CoA. This Veillonella parvula (Staphylococcus parvulus) protein is Methylmalonyl-CoA decarboxylase subunit beta.